Reading from the N-terminus, the 198-residue chain is Iron-sulfur flavoprotein MJ0731 (198 aa).

[4Fe-4S] cluster-binding residues include Cys46, Cys49, Cys52, and Cys59.

The protein belongs to the SsuE family. Isf subfamily. Homodimer. FMN serves as cofactor. [4Fe-4S] cluster is required as a cofactor.

In terms of biological role, redox-active protein probably involved in electron transport. This Methanocaldococcus jannaschii (strain ATCC 43067 / DSM 2661 / JAL-1 / JCM 10045 / NBRC 100440) (Methanococcus jannaschii) protein is Iron-sulfur flavoprotein MJ0731.